Consider the following 556-residue polypeptide: 2-isopropylmalate synthase (556 aa).

In terms of domain architecture, Pyruvate carboxyltransferase spans 33-307; it reads PIWCSSDLRD…HPQLDFSDID (275 aa). Mg(2+)-binding residues include D42, H246, H248, and N282. The interval 439–556 is regulatory domain; that stretch reads ATSPYVLASH…AVTQAEAKAA (118 aa).

Belongs to the alpha-IPM synthase/homocitrate synthase family. LeuA type 2 subfamily. Homodimer. Requires Mg(2+) as cofactor.

It is found in the cytoplasm. The enzyme catalyses 3-methyl-2-oxobutanoate + acetyl-CoA + H2O = (2S)-2-isopropylmalate + CoA + H(+). It participates in amino-acid biosynthesis; L-leucine biosynthesis; L-leucine from 3-methyl-2-oxobutanoate: step 1/4. In terms of biological role, catalyzes the condensation of the acetyl group of acetyl-CoA with 3-methyl-2-oxobutanoate (2-ketoisovalerate) to form 3-carboxy-3-hydroxy-4-methylpentanoate (2-isopropylmalate). The sequence is that of 2-isopropylmalate synthase from Pseudomonas aeruginosa (strain ATCC 15692 / DSM 22644 / CIP 104116 / JCM 14847 / LMG 12228 / 1C / PRS 101 / PAO1).